A 334-amino-acid polypeptide reads, in one-letter code: MATIKDVARLAGVSTTTVSHVINKTRFVAETTQEKVMKAVDELNYAPSAVARSLKCNSTRTIGMLVTQSTNLFFSEVIDGVESYCYRQGYTLILCNTGGIYEKQRDYIRMLAEKRVDGILVMCSDLTEELKEMLDRHSDIPKVVMDWGPESSQADKIIDNSEEGGYIATKYLIDNGHTDIACLSGHFEKAACQERIAGYRRAMAEANLAVNEDWVLEGNFECDTAVLAADNITAMEKRPTAVFCFNDTMALGLMSRLQQNGLKVPDDISVIGYDNIELAEYFSPPLTTIHQPKRRVGKNAFEILLERIKDKEHEKRVFEMQPEIVVRNTVKKLN.

The HTH lacI-type domain maps to Ala2–Cys56. The H-T-H motif DNA-binding region spans Ile4–Asn23. The DNA-binding element occupies Ser48–Cys56. 4 residues coordinate hypoxanthine: Phe73, Lys189, Phe220, and Asp274.

In terms of assembly, homodimer.

It participates in purine metabolism; purine nucleotide biosynthesis [regulation]. Is the main repressor of the genes involved in the de novo synthesis of purine nucleotides, regulating purB, purC, purEK, purF, purHD, purL, purMN and guaBA expression. PurR is allosterically activated to bind its cognate DNA by binding the purine corepressors, hypoxanthine or guanine, thereby effecting transcription repression. This Vibrio campbellii (strain ATCC BAA-1116) protein is HTH-type transcriptional repressor PurR.